The following is a 614-amino-acid chain: Chaperone protein DnaK (614 aa).

Thr-174 bears the Phosphothreonine; by autocatalysis mark. Residues 576–614 (QTGGAAPGPDMGADPGAGGAQGDDNVVDAEYTEVDKDQK) are disordered. Positions 578-589 (GGAAPGPDMGAD) are enriched in low complexity.

This sequence belongs to the heat shock protein 70 family.

Its function is as follows. Acts as a chaperone. This chain is Chaperone protein DnaK, found in Desulfitobacterium hafniense (strain DSM 10664 / DCB-2).